A 335-amino-acid polypeptide reads, in one-letter code: MEKINAVITGVGGYVPDYILTNEEISKMVDTNDEWIMTRIGVKERHILNEEGLGSSYMARKAAKQLMKKTGANPDDIDLVIVATTTPDYHFPSTASILCDKLGLKNAFAFDLQAACCGFLYLMETAANFIRSGRYKKIIIVGADKMSSMVNYTDRATCPIFGDGAAAFMMEPTTEDLGVMDSILRTDGKGLPFLHMKAGGSVCPPSYFTVDNKMHYLHQEGRTVFKYAVSSMSDVSAAIAEKNGLTKDTINWVVPHQANVRIIEAVAHRMELPMDKVLVNIEHYGNTSAATLPLCIWDFEDKLKKGDNIIFTAFGAGFTWGAVYVKWGYDGKKES.

Active-site residues include Cys116 and His256. The ACP-binding stretch occupies residues 257 to 261 (QANVR). Residue Asn286 is part of the active site.

The protein belongs to the thiolase-like superfamily. FabH family. In terms of assembly, homodimer.

It localises to the cytoplasm. The enzyme catalyses malonyl-[ACP] + acetyl-CoA + H(+) = 3-oxobutanoyl-[ACP] + CO2 + CoA. It participates in lipid metabolism; fatty acid biosynthesis. Catalyzes the condensation reaction of fatty acid synthesis by the addition to an acyl acceptor of two carbons from malonyl-ACP. Catalyzes the first condensation reaction which initiates fatty acid synthesis and may therefore play a role in governing the total rate of fatty acid production. Possesses both acetoacetyl-ACP synthase and acetyl transacylase activities. Its substrate specificity determines the biosynthesis of branched-chain and/or straight-chain of fatty acids. The sequence is that of Beta-ketoacyl-[acyl-carrier-protein] synthase III 2 from Bacteroides thetaiotaomicron (strain ATCC 29148 / DSM 2079 / JCM 5827 / CCUG 10774 / NCTC 10582 / VPI-5482 / E50).